The chain runs to 152 residues: 3-hydroxyacyl-[acyl-carrier-protein] dehydratase FabZ (152 aa).

Residue His-57 is part of the active site.

It belongs to the thioester dehydratase family. FabZ subfamily.

Its subcellular location is the cytoplasm. It catalyses the reaction a (3R)-hydroxyacyl-[ACP] = a (2E)-enoyl-[ACP] + H2O. Its function is as follows. Involved in unsaturated fatty acids biosynthesis. Catalyzes the dehydration of short chain beta-hydroxyacyl-ACPs and long chain saturated and unsaturated beta-hydroxyacyl-ACPs. The polypeptide is 3-hydroxyacyl-[acyl-carrier-protein] dehydratase FabZ (Bradyrhizobium sp. (strain BTAi1 / ATCC BAA-1182)).